We begin with the raw amino-acid sequence, 268 residues long: Tryptophan synthase alpha chain (268 aa).

Catalysis depends on proton acceptor residues Glu49 and Asp60.

The protein belongs to the TrpA family. In terms of assembly, tetramer of two alpha and two beta chains.

The catalysed reaction is (1S,2R)-1-C-(indol-3-yl)glycerol 3-phosphate + L-serine = D-glyceraldehyde 3-phosphate + L-tryptophan + H2O. It functions in the pathway amino-acid biosynthesis; L-tryptophan biosynthesis; L-tryptophan from chorismate: step 5/5. Functionally, the alpha subunit is responsible for the aldol cleavage of indoleglycerol phosphate to indole and glyceraldehyde 3-phosphate. This is Tryptophan synthase alpha chain from Xanthomonas axonopodis pv. citri (strain 306).